Here is a 322-residue protein sequence, read N- to C-terminus: Myeloid-associated differentiation marker (322 aa).

The tract at residues 1-25 is disordered; it reads MPVTVTRTTITTTTTSSSGQGSPTI. Ser-22 bears the Phosphoserine mark. MARVEL domains are found at residues 31–163 and 168–319; these read ALTQ…ARPG and YMAT…HLVF. 8 helical membrane passes run 41–61, 70–90, 101–121, 137–157, 171–191, 203–223, 239–259, and 294–314; these read LLQL…GAWT, FTWC…LCGL, FPIT…IIYP, AIAA…EVAW, TVPG…FAFI, LEWC…AILL, FLSG…VLWP, and LAVA…LVHS.

It belongs to the MAL family.

It localises to the membrane. The sequence is that of Myeloid-associated differentiation marker (MYADM) from Pongo abelii (Sumatran orangutan).